Reading from the N-terminus, the 251-residue chain is CDP-diacylglycerol pyrophosphatase (251 aa).

A helical membrane pass occupies residues 4-24 (AGLLFLVMIVIAVVAAGIGYW).

This sequence belongs to the Cdh family.

The protein localises to the cell inner membrane. It carries out the reaction a CDP-1,2-diacyl-sn-glycerol + H2O = a 1,2-diacyl-sn-glycero-3-phosphate + CMP + 2 H(+). Its pathway is phospholipid metabolism; CDP-diacylglycerol degradation; phosphatidate from CDP-diacylglycerol: step 1/1. The polypeptide is CDP-diacylglycerol pyrophosphatase (Escherichia coli O9:H4 (strain HS)).